Reading from the N-terminus, the 296-residue chain is 4-diphosphocytidyl-2-C-methyl-D-erythritol kinase (296 aa).

The active site involves K22. 105 to 115 (PMGGGLGGGSS) contacts ATP. D147 is a catalytic residue.

This sequence belongs to the GHMP kinase family. IspE subfamily.

The enzyme catalyses 4-CDP-2-C-methyl-D-erythritol + ATP = 4-CDP-2-C-methyl-D-erythritol 2-phosphate + ADP + H(+). The protein operates within isoprenoid biosynthesis; isopentenyl diphosphate biosynthesis via DXP pathway; isopentenyl diphosphate from 1-deoxy-D-xylulose 5-phosphate: step 3/6. Its function is as follows. Catalyzes the phosphorylation of the position 2 hydroxy group of 4-diphosphocytidyl-2C-methyl-D-erythritol. This chain is 4-diphosphocytidyl-2-C-methyl-D-erythritol kinase, found in Photobacterium profundum (strain SS9).